A 390-amino-acid chain; its full sequence is Malonyl-CoA-acyl carrier protein transacylase, mitochondrial (390 aa).

Residues Met1–Gly21 constitute a mitochondrion transit peptide. Catalysis depends on residues Ser153 and His270. Position 314 is an N6-succinyllysine (Lys314).

The protein belongs to the type II malonyltransferase family.

It localises to the mitochondrion. The enzyme catalyses holo-[ACP] + malonyl-CoA = malonyl-[ACP] + CoA. It participates in lipid metabolism; fatty acid biosynthesis. Functionally, catalyzes the transfer of a malonyl moiety from malonyl-CoA to the free thiol group of the phosphopantetheine arm of the mitochondrial ACP protein (NDUFAB1). This suggests the existence of the biosynthesis of fatty acids in mitochondria. Also acts as a mitochondrial small ribosomal subunit (mt-SSU) assembly factor. The chain is Malonyl-CoA-acyl carrier protein transacylase, mitochondrial from Homo sapiens (Human).